A 392-amino-acid chain; its full sequence is Protein FAM53C (392 aa).

Met1 bears the N-acetylmethionine mark. The disordered stretch occupies residues 78-119 (LRPPSRGNSPKEQPFSQVLRPEPPDPEKLPVPPAPPSKRHCR). Residues 83–93 (RGNSPKEQPFS) are compositionally biased toward polar residues. 6 positions are modified to phosphoserine: Ser122, Ser162, Ser232, Ser234, Ser255, and Ser273. 2 disordered regions span residues 141 to 167 (LWTPIKHRGSGGGGGPQVPHQSPPKRV) and 204 to 294 (RPCA…EDPR). Residues 241 to 256 (ASRFLPSARSSPASSP) show a composition bias toward low complexity. The span at 278-294 (LDARKTGVKRRHEEDPR) shows a compositional bias: basic and acidic residues. Ser299 carries the phosphoserine modification. Residues 341–364 (ASCSPTGGSSQVLSESEEEEEGAV) are disordered.

Belongs to the FAM53 family.

This chain is Protein FAM53C, found in Homo sapiens (Human).